Reading from the N-terminus, the 619-residue chain is MESEKDIGAKFLGDYRILYRKGQSLWSEDLLAEHRFIKKRYLIRLLLPDLGSSQPFMEAFHDVVVKLAKLNHPGILSIENVSESEGRCFLVTQEQDIPILSLTQYLKSIPRKLTELEIVDIVSQLASLLDYVHSEGLAQEEWNLDSVYIHILNGVPKVILPDLGFASLIKERILDGFISDEENRESKIKERVLLHTSEGKQGREDTYAFGAITYYLLFGFLPQGIFPMPSKVFSDFIYDWDFLISSCLSCFMEERAKELFPLIRKKTLGEELQNVVTNCIESSLREVPDPLESSQNLPQAVLKVGETKVSHQQKESAEHLEFVLVEACSIDEAMDTAIESESSSGVEEEGYSLALQSLLVREPVVSRYVEAEKEEPKPQPILTEMVLIEGGEFSRGSVEGQRDELPVHKVILHSFFLDVHPVTNEQFIRYLECCGSEQDKYYNELIRLRDSRIQRRSGRLVIEPGYAKHPVVGVTWYGASGYAEWIGKRLPTEAEWEIAASGGVAALRYPCGEEIEKSRANFFTADTTTVMSYPPNPYGLYDMAGNVYEWCQDWYGYDFYEISAQEPESPQGPAQGVYRVLRGGCWKSLKDDLRCAHRHRNNPGAVNSTYGFRCAKNIN.

The 288-residue stretch at 15 to 302 (YRILYRKGQS…SSQNLPQAVL (288 aa)) folds into the Protein kinase domain. Residue 21–29 (KGQSLWSED) coordinates ATP. The Proton acceptor role is filled by E141.

It belongs to the protein kinase superfamily. Ser/Thr protein kinase family. Autophosphorylated on serine and threonine residues.

The catalysed reaction is L-seryl-[protein] + ATP = O-phospho-L-seryl-[protein] + ADP + H(+). It carries out the reaction L-threonyl-[protein] + ATP = O-phospho-L-threonyl-[protein] + ADP + H(+). In terms of biological role, together with the serine/threonine kinase PknD, may play a role in the specific interactions with host proteins during intracellular growth. The chain is Serine/threonine-protein kinase pkn1 (pkn1) from Chlamydia pneumoniae (Chlamydophila pneumoniae).